The primary structure comprises 173 residues: Ribosome maturation factor RimP (173 aa).

This sequence belongs to the RimP family.

It is found in the cytoplasm. In terms of biological role, required for maturation of 30S ribosomal subunits. In Chlorobium phaeobacteroides (strain DSM 266 / SMG 266 / 2430), this protein is Ribosome maturation factor RimP.